Consider the following 242-residue polypeptide: Tryptophan synthase alpha chain (242 aa).

Active-site proton acceptor residues include glutamate 31 and aspartate 42.

Belongs to the TrpA family. Tetramer of two alpha and two beta chains.

It carries out the reaction (1S,2R)-1-C-(indol-3-yl)glycerol 3-phosphate + L-serine = D-glyceraldehyde 3-phosphate + L-tryptophan + H2O. Its pathway is amino-acid biosynthesis; L-tryptophan biosynthesis; L-tryptophan from chorismate: step 5/5. Its function is as follows. The alpha subunit is responsible for the aldol cleavage of indoleglycerol phosphate to indole and glyceraldehyde 3-phosphate. The chain is Tryptophan synthase alpha chain from Staphylococcus aureus (strain bovine RF122 / ET3-1).